Reading from the N-terminus, the 530-residue chain is Probable histone-arginine methyltransferase CARMER (530 aa).

Residues 141–450 (ASQYFQFYGY…QSYDVTIDLH (310 aa)) form the SAM-dependent MTase PRMT-type domain. The S-adenosyl-L-methionine site is built by Gln154, Arg163, Gly187, Glu209, Glu238, and Thr266. The residue at position 501 (Arg501) is an Asymmetric dimethylarginine; by autocatalysis.

The protein belongs to the class I-like SAM-binding methyltransferase superfamily. Protein arginine N-methyltransferase family. Homodimer. Interacts with EcR. In terms of processing, the dimethylated protein is the major form. Present ubiquitously (at protein level). Expressed in the imaginal disks and in larval brains, and to a much lesser degree in the polytene larval tissue such as salivary glands.

It localises to the cytoplasm. The protein resides in the nucleus. It carries out the reaction L-arginyl-[protein] + 2 S-adenosyl-L-methionine = N(omega),N(omega)-dimethyl-L-arginyl-[protein] + 2 S-adenosyl-L-homocysteine + 2 H(+). Its function is as follows. Methylates (mono- and asymmetric dimethylation) the guanidino nitrogens of arginyl residues in proteins. May methylate histone H3 at 'Arg-17' and activate transcription via chromatin remodeling. Coordinates ecdysone-mediated expression of cell death genes. The sequence is that of Probable histone-arginine methyltransferase CARMER (Art4) from Drosophila melanogaster (Fruit fly).